The sequence spans 494 residues: Endoglucanase 1 (494 aa).

A signal peptide spans 1–25; it reads MDCSSPLSLFHLLLVCTVMVKCCSA. The active-site Nucleophile is Asp82. N-linked (GlcNAc...) asparagine glycosylation is found at Asn254 and Asn359. Active-site residues include His411, Asp462, and Glu471.

It belongs to the glycosyl hydrolase 9 (cellulase E) family.

It catalyses the reaction Endohydrolysis of (1-&gt;4)-beta-D-glucosidic linkages in cellulose, lichenin and cereal beta-D-glucans.. Involved in ripening fruit process. This is Endoglucanase 1 (CEL1) from Persea americana (Avocado).